We begin with the raw amino-acid sequence, 303 residues long: ATP synthase gamma chain (303 aa).

This sequence belongs to the ATPase gamma chain family. As to quaternary structure, F-type ATPases have 2 components, CF(1) - the catalytic core - and CF(0) - the membrane proton channel. CF(1) has five subunits: alpha(3), beta(3), gamma(1), delta(1), epsilon(1). CF(0) has three main subunits: a, b and c.

It is found in the cell inner membrane. Produces ATP from ADP in the presence of a proton gradient across the membrane. The gamma chain is believed to be important in regulating ATPase activity and the flow of protons through the CF(0) complex. The protein is ATP synthase gamma chain of Bartonella henselae (strain ATCC 49882 / DSM 28221 / CCUG 30454 / Houston 1) (Rochalimaea henselae).